Here is a 114-residue protein sequence, read N- to C-terminus: Large ribosomal subunit protein bL20 (114 aa).

It belongs to the bacterial ribosomal protein bL20 family.

Functionally, binds directly to 23S ribosomal RNA and is necessary for the in vitro assembly process of the 50S ribosomal subunit. It is not involved in the protein synthesizing functions of that subunit. The polypeptide is Large ribosomal subunit protein bL20 (Flavobacterium johnsoniae (strain ATCC 17061 / DSM 2064 / JCM 8514 / BCRC 14874 / CCUG 350202 / NBRC 14942 / NCIMB 11054 / UW101) (Cytophaga johnsonae)).